A 528-amino-acid chain; its full sequence is Folylpolyglutamate synthase (528 aa).

104–107 contributes to the ATP binding site; sequence GKGG. Mg(2+) is bound by residues S134, E208, and H236. The ATP site is built by R351 and D365.

This sequence belongs to the folylpolyglutamate synthase family. A monovalent cation is required as a cofactor.

The protein localises to the mitochondrion inner membrane. Its subcellular location is the mitochondrion matrix. The protein resides in the cytoplasm. The enzyme catalyses (6S)-5,6,7,8-tetrahydrofolyl-(gamma-L-Glu)(n) + L-glutamate + ATP = (6S)-5,6,7,8-tetrahydrofolyl-(gamma-L-Glu)(n+1) + ADP + phosphate + H(+). Its pathway is cofactor biosynthesis; tetrahydrofolylpolyglutamate biosynthesis. Functionally, catalyzes conversion of folates to polyglutamate derivatives allowing concentration of folate compounds in the cell and the intracellular retention of these cofactors, which are important substrates for most of the folate-dependent enzymes that are involved in one-carbon transfer reactions involved in purine, pyrimidine and amino acid synthesis. This Neurospora crassa (strain ATCC 24698 / 74-OR23-1A / CBS 708.71 / DSM 1257 / FGSC 987) protein is Folylpolyglutamate synthase (met-6).